Reading from the N-terminus, the 576-residue chain is uncharacterized protein (576 aa).

2 stretches are compositionally biased toward polar residues: residues 1–21 and 28–40; these read MSTN…QSAS and HTTS…TYQL. The disordered stretch occupies residues 1-40; that stretch reads MSTNPNAGIQPLTNSISQSASAHPELYHTTSHESVSTYQL. Transmembrane regions (helical) follow at residues 149–169, 173–193, 200–220, 231–251, 261–281, 291–311, 366–386, 401–421, 446–466, 472–492, 503–525, and 542–562; these read FASS…HISL, LLTM…WAPL, KLPL…VAVA, FFSG…FADM, ITIF…IGGF, WTEY…YLFC, PIVF…YLLL, MGVA…GSAI, LPPM…LSWS, VHWI…LLIF, YLFR…AAGF, and GSLL…FFFF.

The protein belongs to the major facilitator superfamily. CAR1 family.

It localises to the endoplasmic reticulum. The protein localises to the golgi apparatus. It is found in the membrane. This is an uncharacterized protein from Schizosaccharomyces pombe (strain 972 / ATCC 24843) (Fission yeast).